We begin with the raw amino-acid sequence, 379 residues long: Dual-specificity RNA methyltransferase RlmN (379 aa).

Glu-95 (proton acceptor) is an active-site residue. Residues 101 to 345 form the Radical SAM core domain; that stretch reads EETRGTLCVS…TTVRKTRGDD (245 aa). Cysteines 108 and 350 form a disulfide. [4Fe-4S] cluster-binding residues include Cys-115, Cys-119, and Cys-122. Residues 176–177, Ser-208, 230–232, and Asn-307 each bind S-adenosyl-L-methionine; these read GE and SLH. Cys-350 (S-methylcysteine intermediate) is an active-site residue.

The protein belongs to the radical SAM superfamily. RlmN family. The cofactor is [4Fe-4S] cluster.

Its subcellular location is the cytoplasm. The catalysed reaction is adenosine(2503) in 23S rRNA + 2 reduced [2Fe-2S]-[ferredoxin] + 2 S-adenosyl-L-methionine = 2-methyladenosine(2503) in 23S rRNA + 5'-deoxyadenosine + L-methionine + 2 oxidized [2Fe-2S]-[ferredoxin] + S-adenosyl-L-homocysteine. It catalyses the reaction adenosine(37) in tRNA + 2 reduced [2Fe-2S]-[ferredoxin] + 2 S-adenosyl-L-methionine = 2-methyladenosine(37) in tRNA + 5'-deoxyadenosine + L-methionine + 2 oxidized [2Fe-2S]-[ferredoxin] + S-adenosyl-L-homocysteine. Specifically methylates position 2 of adenine 2503 in 23S rRNA and position 2 of adenine 37 in tRNAs. m2A2503 modification seems to play a crucial role in the proofreading step occurring at the peptidyl transferase center and thus would serve to optimize ribosomal fidelity. This Burkholderia cenocepacia (strain HI2424) protein is Dual-specificity RNA methyltransferase RlmN.